A 421-amino-acid chain; its full sequence is ATP-dependent RNA helicase eIF4A (421 aa).

The interval 1-26 (MSNDKGLEEIPEDQSTTPHKPTSNVG) is disordered. The span at 13–26 (DQSTTPHKPTSNVG) shows a compositional bias: polar residues. The Q motif signature appears at 48 to 76 (DSFDAMELKPELLRGVYAYGFERPSAIQQ). A Helicase ATP-binding domain is found at 79–249 (IKPIIKGSDV…TKFMRDPVRI (171 aa)). 92–99 (AQSGTGKT) is a binding site for ATP. A DEAD box motif is present at residues 197 to 200 (DEAD). The Helicase C-terminal domain occupies 260–421 (GIKQFYIAVE…EMPMNVADLI (162 aa)).

It belongs to the DEAD box helicase family. eIF4A subfamily. In terms of assembly, component of the eIF4F complex, which composition varies with external and internal environmental conditions. It is composed of at least eIF4A, eIF4E and eIF4G.

Its subcellular location is the cytoplasm. The catalysed reaction is ATP + H2O = ADP + phosphate + H(+). ATP-dependent RNA helicase which is a subunit of the eIF4F complex involved in cap recognition and is required for mRNA binding to ribosome. In the current model of translation initiation, eIF4A unwinds RNA secondary structures in the 5'-UTR of mRNAs which is necessary to allow efficient binding of the small ribosomal subunit, and subsequent scanning for the initiator codon. The protein is ATP-dependent RNA helicase eIF4A (tif1) of Aspergillus oryzae (strain ATCC 42149 / RIB 40) (Yellow koji mold).